A 123-amino-acid chain; its full sequence is Small ribosomal subunit protein uS12 (123 aa).

Asp89 bears the 3-methylthioaspartic acid mark.

This sequence belongs to the universal ribosomal protein uS12 family. As to quaternary structure, part of the 30S ribosomal subunit. Contacts proteins S8 and S17. May interact with IF1 in the 30S initiation complex.

In terms of biological role, with S4 and S5 plays an important role in translational accuracy. Functionally, interacts with and stabilizes bases of the 16S rRNA that are involved in tRNA selection in the A site and with the mRNA backbone. Located at the interface of the 30S and 50S subunits, it traverses the body of the 30S subunit contacting proteins on the other side and probably holding the rRNA structure together. The combined cluster of proteins S8, S12 and S17 appears to hold together the shoulder and platform of the 30S subunit. This is Small ribosomal subunit protein uS12 from Orientia tsutsugamushi (strain Ikeda) (Rickettsia tsutsugamushi).